The primary structure comprises 130 residues: Con-Ins G2 (130 aa).

A signal peptide spans 1–24 (MTTSSYFLLVALGLLLYVRQSFST). 4 disulfides stabilise this stretch: C29–C100, C41–C103, C53–C116, and C102–C107. P34 is subject to 4-hydroxyproline; partial. The segment at 54 to 74 (EEEEARRGGTNDGGKKRRRAS) is disordered. The propeptide at 59-92 (RRGGTNDGGKKRRRASPLWKRRRFLSMLKARAKR) is c peptide. Position 111 is a 4-carboxyglutamate; partial (E111).

It belongs to the insulin family. Heterodimer of A and B chains; disulfide-linked. In terms of tissue distribution, expressed by the venom gland.

It localises to the secreted. This venom insulin, from a fish-hunting cone snail, facilitates prey capture by rapidly inducing hypoglycemic shock. Intraperitoneal injection of this peptide into zebrafish lowers blood glucose with the same potency than human insulin. In vivo, when applied to water, this peptide reduces overall locomotor activity of zebrafish larvae, observed as a significant decrease in the percentage of time spent swimming and movement frequency. The chain is Con-Ins G2 from Conus geographus (Geography cone).